Consider the following 417-residue polypeptide: Imidazolonepropionase (417 aa).

Positions 77 and 79 each coordinate Fe(3+). 2 residues coordinate Zn(2+): His77 and His79. 3 residues coordinate 4-imidazolone-5-propanoate: Arg86, Tyr149, and His182. Tyr149 lines the N-formimidoyl-L-glutamate pocket. His247 provides a ligand contact to Fe(3+). His247 provides a ligand contact to Zn(2+). Gln250 lines the 4-imidazolone-5-propanoate pocket. Residue Asp322 participates in Fe(3+) binding. A Zn(2+)-binding site is contributed by Asp322. N-formimidoyl-L-glutamate contacts are provided by Asn324 and Gly326. Thr327 is a binding site for 4-imidazolone-5-propanoate.

Belongs to the metallo-dependent hydrolases superfamily. HutI family. The cofactor is Zn(2+). Fe(3+) is required as a cofactor.

The protein localises to the cytoplasm. It catalyses the reaction 4-imidazolone-5-propanoate + H2O = N-formimidoyl-L-glutamate. The protein operates within amino-acid degradation; L-histidine degradation into L-glutamate; N-formimidoyl-L-glutamate from L-histidine: step 3/3. Catalyzes the hydrolytic cleavage of the carbon-nitrogen bond in imidazolone-5-propanoate to yield N-formimidoyl-L-glutamate. It is the third step in the universal histidine degradation pathway. The sequence is that of Imidazolonepropionase from Cupriavidus taiwanensis (strain DSM 17343 / BCRC 17206 / CCUG 44338 / CIP 107171 / LMG 19424 / R1) (Ralstonia taiwanensis (strain LMG 19424)).